The sequence spans 441 residues: uncharacterized protein (441 aa).

Positions 1–23 (MSRKYLLSLLLVGALVISVVASG) are cleaved as a signal peptide. The residue at position 24 (C24) is an N-acetylcysteine. The S-archaeol cysteine moiety is linked to residue C24.

This sequence belongs to the bacterial solute-binding protein 1 family.

The protein resides in the cell membrane. Its function is as follows. Probably part of a binding-protein-dependent transport system PH1214/15/16. This is an uncharacterized protein from Pyrococcus horikoshii (strain ATCC 700860 / DSM 12428 / JCM 9974 / NBRC 100139 / OT-3).